We begin with the raw amino-acid sequence, 230 residues long: Transmembrane ascorbate ferrireductase 2 (230 aa).

A run of 2 helical transmembrane segments spans residues 5-25 (VLGG…IAAL) and 50-70 (VHPV…MLAY). The Cytochrome b561 domain maps to 14 to 218 (VVRVLGFIIA…LGGFVILGVV (205 aa)). Position 51 (histidine 51) interacts with heme b. 2 residues coordinate L-ascorbate: lysine 77 and lysine 81. A helical membrane pass occupies residues 82–102 (LVHLTLQLTAFILSLIGVWAA). Histidine 84 provides a ligand contact to heme b. Monodehydro-L-ascorbate radical contacts are provided by phenylalanine 105, histidine 106, and tyrosine 115. Histidine 118 is a heme b binding site. A helical transmembrane segment spans residues 120–140 (WLGLACLFLFAFQWAAGFVTY). L-ascorbate is bound by residues tyrosine 140, arginine 150, and alanine 151. Heme b is bound at residue histidine 157. The chain crosses the membrane as a helical span at residues 157–177 (HVFLGISIYALALVTATTGIL). 2 residues coordinate monodehydro-L-ascorbate radical: phenylalanine 182 and asparagine 186. A helical transmembrane segment spans residues 198–218 (LVNTMGVLILILGGFVILGVV).

Homodimer. Requires heme b as cofactor. In terms of tissue distribution, expressed in roots, seedlings, leaves and flowers. Expressed in the L1 layer of the shoot apex, in the epidermis of leaf primordia and young leaves and in vascular bundles. In the differentiation zone of the root, detected in the pericycle and in the epidermis, but not in the cortex. Strongly expressed in the cortical region of the root tip, in the meristematic tissue and in the epidermal cell layer of lateral roots, but not in the root caps. Highly expressed in unfertilized ovules. In mature embryos, expressed in the epidermis, cotyledon tips and root tips.

It is found in the membrane. The enzyme catalyses Fe(3+)(out) + L-ascorbate(in) = monodehydro-L-ascorbate radical(in) + Fe(2+)(out) + H(+). Its function is as follows. Two-heme-containing cytochrome. Catalyzes ascorbate-dependent transmembrane ferric-chelate reduction. The polypeptide is Transmembrane ascorbate ferrireductase 2 (CYB561B) (Arabidopsis thaliana (Mouse-ear cress)).